Here is a 329-residue protein sequence, read N- to C-terminus: Cathepsin K (329 aa).

The signal sequence occupies residues 1–15; the sequence is MWGLKVLLLPVVSFA. The propeptide at 16–114 is activation peptide; that stretch reads LYPEEILDTH…TLYIPEWEGR (99 aa). N-linked (GlcNAc...) asparagine glycosylation occurs at Asn103. Disulfide bonds link Cys136–Cys177, Cys170–Cys210, and Cys269–Cys318. Cys139 is a catalytic residue. Residues His276 and Asn296 contribute to the active site.

Belongs to the peptidase C1 family. In terms of tissue distribution, predominantly expressed in osteoclasts (bones). Expressed in thyroid epithelial cells.

Its subcellular location is the lysosome. It is found in the secreted. The protein resides in the apical cell membrane. It catalyses the reaction Broad proteolytic activity. With small-molecule substrates and inhibitors, the major determinant of specificity is P2, which is preferably Leu, Met &gt; Phe, and not Arg.. In terms of biological role, thiol protease involved in osteoclastic bone resorption and may participate partially in the disorder of bone remodeling. Displays potent endoprotease activity against fibrinogen at acid pH. May play an important role in extracellular matrix degradation. Involved in the release of thyroid hormone thyroxine (T4) by limited proteolysis of TG/thyroglobulin in the thyroid follicle lumen. This is Cathepsin K (CTSK) from Homo sapiens (Human).